The sequence spans 311 residues: Methionyl-tRNA formyltransferase (311 aa).

110-113 (SLLP) provides a ligand contact to (6S)-5,6,7,8-tetrahydrofolate.

The protein belongs to the Fmt family.

It carries out the reaction L-methionyl-tRNA(fMet) + (6R)-10-formyltetrahydrofolate = N-formyl-L-methionyl-tRNA(fMet) + (6S)-5,6,7,8-tetrahydrofolate + H(+). Its function is as follows. Attaches a formyl group to the free amino group of methionyl-tRNA(fMet). The formyl group appears to play a dual role in the initiator identity of N-formylmethionyl-tRNA by promoting its recognition by IF2 and preventing the misappropriation of this tRNA by the elongation apparatus. In Streptococcus pyogenes serotype M3 (strain ATCC BAA-595 / MGAS315), this protein is Methionyl-tRNA formyltransferase.